We begin with the raw amino-acid sequence, 1099 residues long: Carbamoyl phosphate synthase large chain (1099 aa).

The interval 1–402 (MPKREDIKRI…ALGKALRSLE (402 aa)) is carboxyphosphate synthetic domain. The ATP site is built by Arg129, Arg169, Gly175, Gly176, Glu208, Val210, Glu215, Gly241, Ile242, His243, Gln285, and Glu299. Residues 133–328 (KETMEKAGLE…IAKVAALLAV (196 aa)) enclose the ATP-grasp 1 domain. Residues Gln285, Glu299, and Asn301 each contribute to the Mg(2+) site. Residues Gln285, Glu299, and Asn301 each contribute to the Mn(2+) site. The interval 403–541 (LDAAPKLDLE…STYNGVENEA (139 aa)) is oligomerization domain. The segment at 542–944 (VPSDREKIMI…AFAKAQIAAG (403 aa)) is carbamoyl phosphate synthetic domain. Positions 666-857 (AKLLKQIGLK…VARIAAKIMV (192 aa)) constitute an ATP-grasp 2 domain. 10 residues coordinate ATP: Arg702, Lys741, Leu743, Glu748, Gly773, Val774, His775, Ser776, Gln816, and Glu828. The Mg(2+) site is built by Gln816, Glu828, and Asn830. Mn(2+) is bound by residues Gln816, Glu828, and Asn830. Residues 945 to 1099 (NPLPTTGAIL…VRRLTDTWKM (155 aa)) form the MGS-like domain. The interval 945-1099 (NPLPTTGAIL…VRRLTDTWKM (155 aa)) is allosteric domain.

The protein belongs to the CarB family. As to quaternary structure, composed of two chains; the small (or glutamine) chain promotes the hydrolysis of glutamine to ammonia, which is used by the large (or ammonia) chain to synthesize carbamoyl phosphate. Tetramer of heterodimers (alpha,beta)4. Mg(2+) is required as a cofactor. It depends on Mn(2+) as a cofactor.

The catalysed reaction is hydrogencarbonate + L-glutamine + 2 ATP + H2O = carbamoyl phosphate + L-glutamate + 2 ADP + phosphate + 2 H(+). It catalyses the reaction hydrogencarbonate + NH4(+) + 2 ATP = carbamoyl phosphate + 2 ADP + phosphate + 2 H(+). It functions in the pathway amino-acid biosynthesis; L-arginine biosynthesis; carbamoyl phosphate from bicarbonate: step 1/1. It participates in pyrimidine metabolism; UMP biosynthesis via de novo pathway; (S)-dihydroorotate from bicarbonate: step 1/3. Functionally, large subunit of the glutamine-dependent carbamoyl phosphate synthetase (CPSase). CPSase catalyzes the formation of carbamoyl phosphate from the ammonia moiety of glutamine, carbonate, and phosphate donated by ATP, constituting the first step of 2 biosynthetic pathways, one leading to arginine and/or urea and the other to pyrimidine nucleotides. The large subunit (synthetase) binds the substrates ammonia (free or transferred from glutamine from the small subunit), hydrogencarbonate and ATP and carries out an ATP-coupled ligase reaction, activating hydrogencarbonate by forming carboxy phosphate which reacts with ammonia to form carbamoyl phosphate. The chain is Carbamoyl phosphate synthase large chain from Thermotoga petrophila (strain ATCC BAA-488 / DSM 13995 / JCM 10881 / RKU-1).